The sequence spans 78 residues: Large ribosomal subunit protein bL28 (78 aa).

This sequence belongs to the bacterial ribosomal protein bL28 family.

The protein is Large ribosomal subunit protein bL28 of Dichelobacter nodosus (strain VCS1703A).